A 533-amino-acid chain; its full sequence is CTP synthase (533 aa).

The amidoligase domain stretch occupies residues 1-265 (MTKFIFVTGG…PAYLARRLGL (265 aa)). A CTP-binding site is contributed by Ser-13. Ser-13 lines the UTP pocket. 14–19 (GLGKGI) is a binding site for ATP. Tyr-54 contacts L-glutamine. Asp-71 is a binding site for ATP. 2 residues coordinate Mg(2+): Asp-71 and Glu-139. Residues 146–148 (DIE), 186–191 (KTKPTQ), and Lys-222 each bind CTP. UTP contacts are provided by residues 186-191 (KTKPTQ) and Lys-222. Residues 290–532 (EIAIVGKYVK…VEAAKKKKYG (243 aa)) form the Glutamine amidotransferase type-1 domain. L-glutamine is bound at residue Gly-351. Catalysis depends on Cys-378, which acts as the Nucleophile; for glutamine hydrolysis. Residues 379 to 382 (FGFQ), Glu-402, and Arg-459 contribute to the L-glutamine site. Catalysis depends on residues His-505 and Glu-507.

Belongs to the CTP synthase family. As to quaternary structure, homotetramer.

The catalysed reaction is UTP + L-glutamine + ATP + H2O = CTP + L-glutamate + ADP + phosphate + 2 H(+). It catalyses the reaction L-glutamine + H2O = L-glutamate + NH4(+). The enzyme catalyses UTP + NH4(+) + ATP = CTP + ADP + phosphate + 2 H(+). It functions in the pathway pyrimidine metabolism; CTP biosynthesis via de novo pathway; CTP from UDP: step 2/2. Its activity is regulated as follows. Allosterically activated by GTP, when glutamine is the substrate; GTP has no effect on the reaction when ammonia is the substrate. The allosteric effector GTP functions by stabilizing the protein conformation that binds the tetrahedral intermediate(s) formed during glutamine hydrolysis. Inhibited by the product CTP, via allosteric rather than competitive inhibition. In terms of biological role, catalyzes the ATP-dependent amination of UTP to CTP with either L-glutamine or ammonia as the source of nitrogen. Regulates intracellular CTP levels through interactions with the four ribonucleotide triphosphates. This chain is CTP synthase, found in Thermococcus kodakarensis (strain ATCC BAA-918 / JCM 12380 / KOD1) (Pyrococcus kodakaraensis (strain KOD1)).